We begin with the raw amino-acid sequence, 207 residues long: Ribosomal RNA small subunit methyltransferase G (207 aa).

S-adenosyl-L-methionine is bound by residues G73, L78, 124–125 (VE), and R139.

The protein belongs to the methyltransferase superfamily. RNA methyltransferase RsmG family.

It localises to the cytoplasm. The catalysed reaction is guanosine(527) in 16S rRNA + S-adenosyl-L-methionine = N(7)-methylguanosine(527) in 16S rRNA + S-adenosyl-L-homocysteine. Its function is as follows. Specifically methylates the N7 position of guanine in position 527 of 16S rRNA. This Cronobacter sakazakii (strain ATCC BAA-894) (Enterobacter sakazakii) protein is Ribosomal RNA small subunit methyltransferase G.